The sequence spans 314 residues: Methionyl-tRNA formyltransferase (314 aa).

Residue 111-114 (SLLP) coordinates (6S)-5,6,7,8-tetrahydrofolate.

This sequence belongs to the Fmt family.

The enzyme catalyses L-methionyl-tRNA(fMet) + (6R)-10-formyltetrahydrofolate = N-formyl-L-methionyl-tRNA(fMet) + (6S)-5,6,7,8-tetrahydrofolate + H(+). Attaches a formyl group to the free amino group of methionyl-tRNA(fMet). The formyl group appears to play a dual role in the initiator identity of N-formylmethionyl-tRNA by promoting its recognition by IF2 and preventing the misappropriation of this tRNA by the elongation apparatus. This is Methionyl-tRNA formyltransferase from Nitrobacter winogradskyi (strain ATCC 25391 / DSM 10237 / CIP 104748 / NCIMB 11846 / Nb-255).